We begin with the raw amino-acid sequence, 238 residues long: Androgen-induced gene 1 protein (238 aa).

The Cytoplasmic segment spans residues methionine 1 to alanine 12. The chain crosses the membrane as a helical span at residues isoleucine 13 to proline 30. Residues serine 31 to phenylalanine 44 are Extracellular-facing. Residues isoleucine 45–threonine 67 form a helical membrane-spanning segment. Residues arginine 68 to aspartate 87 are Cytoplasmic-facing. A helical transmembrane segment spans residues tryptophan 88–alanine 110. The Extracellular portion of the chain corresponds to tyrosine 111–phenylalanine 124. The helical transmembrane segment at isoleucine 125–glutamate 144 threads the bilayer. Residues methionine 145–serine 156 are Cytoplasmic-facing. The chain crosses the membrane as a helical span at residues serine 157 to valine 179. At threonine 180–proline 193 the chain is on the extracellular side. Residues glycine 194–valine 216 traverse the membrane as a helical segment. Residues leucine 217 to glutamate 238 lie on the Cytoplasmic side of the membrane.

This sequence belongs to the AIG1 family. As to expression, highly expressed in heart, ovary, testis, liver, and kidney, at lower levels in spleen, prostate, brain, skeletal muscle, pancreas, small intestine and colon, and undetected in peripheral blood leukocytes, thymus, lung and placenta. AIG1 expression is higher in hair follicles from males than from females.

The protein localises to the cell membrane. The catalysed reaction is 9-hexadecanoyloxy-octadecanoate + H2O = 9-hydroxy-octadecanoate + hexadecanoate + H(+). It carries out the reaction 12-hexadecanoyloxy-octadecanoate + H2O = 12-hydroxyoctadecanoate + hexadecanoate + H(+). It catalyses the reaction 9-(9Z-hexadecenoyloxy)-octadecanoate + H2O = (9Z)-hexadecenoate + 9-hydroxy-octadecanoate + H(+). The enzyme catalyses 12-(9Z-hexadecenoyloxy)-octadecanoate + H2O = 12-hydroxyoctadecanoate + (9Z)-hexadecenoate + H(+). The catalysed reaction is 13-(9Z-hexadecenoyloxy)-octadecanoate + H2O = 13-hydroxy-octadecanoate + (9Z)-hexadecenoate + H(+). It carries out the reaction 9-octadecanoyloxy-octadecanoate + H2O = 9-hydroxy-octadecanoate + octadecanoate + H(+). It catalyses the reaction 12-octadecanoyloxy-octadecanoate + H2O = 12-hydroxyoctadecanoate + octadecanoate + H(+). The enzyme catalyses 13-octadecanoyloxy-octadecanoate + H2O = 13-hydroxy-octadecanoate + octadecanoate + H(+). The catalysed reaction is 9-(9Z-octadecenoyloxy)-octadecanoate + H2O = 9-hydroxy-octadecanoate + (9Z)-octadecenoate + H(+). It carries out the reaction 12-(9Z-octadecenoyloxy)-octadecanoate + H2O = 12-hydroxyoctadecanoate + (9Z)-octadecenoate + H(+). It catalyses the reaction 13-(9Z-octadecenoyloxy)-octadecanoate + H2O = 13-hydroxy-octadecanoate + (9Z)-octadecenoate + H(+). The enzyme catalyses 5-(9Z-hexadecenoyloxy)-octadecanoate + H2O = 5-hydroxy-octadecanoate + (9Z)-hexadecenoate + H(+). Its activity is regulated as follows. Inhibited by N-hydroxyhydantoin carbamate JJH260 and beta-lactone KC01. Hydrolyzes bioactive fatty-acid esters of hydroxy-fatty acids (FAHFAs), but not other major classes of lipids. Show a preference for FAHFAs with branching distal from the carboxylate head group of the lipids. The chain is Androgen-induced gene 1 protein (AIG1) from Homo sapiens (Human).